A 53-amino-acid polypeptide reads, in one-letter code: Large ribosomal subunit protein uL30 (53 aa).

It belongs to the universal ribosomal protein uL30 family. As to quaternary structure, part of the 50S ribosomal subunit.

The sequence is that of Large ribosomal subunit protein uL30 from Deinococcus geothermalis (strain DSM 11300 / CIP 105573 / AG-3a).